Consider the following 447-residue polypeptide: UPF0210 protein LSL_0162 (447 aa).

It belongs to the UPF0210 family. In terms of assembly, homodimer.

The chain is UPF0210 protein LSL_0162 from Ligilactobacillus salivarius (strain UCC118) (Lactobacillus salivarius).